Reading from the N-terminus, the 436-residue chain is UDP-N-acetylmuramate--L-alanine ligase (436 aa).

Residue glycine 108–serine 114 participates in ATP binding.

Belongs to the MurCDEF family.

The protein localises to the cytoplasm. The enzyme catalyses UDP-N-acetyl-alpha-D-muramate + L-alanine + ATP = UDP-N-acetyl-alpha-D-muramoyl-L-alanine + ADP + phosphate + H(+). The protein operates within cell wall biogenesis; peptidoglycan biosynthesis. Functionally, cell wall formation. In Bacillus cereus (strain ZK / E33L), this protein is UDP-N-acetylmuramate--L-alanine ligase.